The primary structure comprises 313 residues: Ribosomal RNA small subunit methyltransferase H (313 aa).

Residues 35–37 (GGH), D55, F79, D101, and Q108 contribute to the S-adenosyl-L-methionine site.

Belongs to the methyltransferase superfamily. RsmH family.

The protein localises to the cytoplasm. It carries out the reaction cytidine(1402) in 16S rRNA + S-adenosyl-L-methionine = N(4)-methylcytidine(1402) in 16S rRNA + S-adenosyl-L-homocysteine + H(+). Specifically methylates the N4 position of cytidine in position 1402 (C1402) of 16S rRNA. The protein is Ribosomal RNA small subunit methyltransferase H of Musicola paradisiaca (strain Ech703) (Dickeya paradisiaca).